The primary structure comprises 248 residues: Small ribosomal subunit protein uS3 (248 aa).

The KH type-2 domain occupies 39–107 (IRQMLLKQLK…EVFINIVEIR (69 aa)). A disordered region spans residues 214–248 (AVDKRMTAESEGPSSGRPPRRDRDRDRDRDRDSAA). Residues 232–248 (PRRDRDRDRDRDRDSAA) show a composition bias toward basic and acidic residues.

The protein belongs to the universal ribosomal protein uS3 family. As to quaternary structure, part of the 30S ribosomal subunit. Forms a tight complex with proteins S10 and S14.

Functionally, binds the lower part of the 30S subunit head. Binds mRNA in the 70S ribosome, positioning it for translation. The protein is Small ribosomal subunit protein uS3 of Azorhizobium caulinodans (strain ATCC 43989 / DSM 5975 / JCM 20966 / LMG 6465 / NBRC 14845 / NCIMB 13405 / ORS 571).